We begin with the raw amino-acid sequence, 248 residues long: MIKERVKMEVIGLEIPLISGNEEYTLAELISKYPLEENDIIVIAETVVSKSEKNVILKDTIKPSNEAIELSKKLGKEPEVVQVILDESNETVRLGPNFIVTETKHGFVCANSGVDESNTSKGIKPLPKNPDKSANEIRKGIEEITGKKVGVIINDSMGRPFRKGSCGVAIGVSGVCGLWDRKGEKDLFGRELKTTEVGIADELAATASVVMGQSDEGIPLVIIRNAPVPFKEGTGKELIRKKEEDVFR.

GTP contacts are provided by residues 15–18, 45–46, and K50; these read IPLI and ET. D115 serves as a coordination point for a divalent metal cation. GTP is bound at residue N118. D155, S156, and Q213 together coordinate a divalent metal cation. 211-218 lines the GTP pocket; sequence MGQSDEGI.

It belongs to the CofE family. As to quaternary structure, homodimer. Mg(2+) is required as a cofactor. Mn(2+) serves as cofactor. Requires K(+) as cofactor.

The catalysed reaction is oxidized coenzyme F420-0 + GTP + L-glutamate = oxidized coenzyme F420-1 + GDP + phosphate + H(+). It catalyses the reaction oxidized coenzyme F420-1 + GTP + L-glutamate = oxidized coenzyme F420-2 + GDP + phosphate + H(+). Its pathway is cofactor biosynthesis; coenzyme F420 biosynthesis. Catalyzes the GTP-dependent successive addition of two or more gamma-linked L-glutamates to the L-lactyl phosphodiester of 7,8-didemethyl-8-hydroxy-5-deazariboflavin (F420-0) to form coenzyme F420-0-glutamyl-glutamate (F420-2) or polyglutamated F420 derivatives. The polypeptide is Coenzyme F420:L-glutamate ligase (Methanococcus maripaludis (strain C6 / ATCC BAA-1332)).